The primary structure comprises 346 residues: UDP-3-O-acylglucosamine N-acyltransferase (346 aa).

His253 functions as the Proton acceptor in the catalytic mechanism.

The protein belongs to the transferase hexapeptide repeat family. LpxD subfamily. In terms of assembly, homotrimer.

It catalyses the reaction a UDP-3-O-[(3R)-3-hydroxyacyl]-alpha-D-glucosamine + a (3R)-hydroxyacyl-[ACP] = a UDP-2-N,3-O-bis[(3R)-3-hydroxyacyl]-alpha-D-glucosamine + holo-[ACP] + H(+). It participates in bacterial outer membrane biogenesis; LPS lipid A biosynthesis. In terms of biological role, catalyzes the N-acylation of UDP-3-O-acylglucosamine using 3-hydroxyacyl-ACP as the acyl donor. Is involved in the biosynthesis of lipid A, a phosphorylated glycolipid that anchors the lipopolysaccharide to the outer membrane of the cell. This Rickettsia typhi (strain ATCC VR-144 / Wilmington) protein is UDP-3-O-acylglucosamine N-acyltransferase.